The chain runs to 395 residues: Zinc finger protein 385D (395 aa).

The Matrin-type 1 zinc-finger motif lies at 80 to 110 (ISCNICQLRFNSDSQAAAHYKGTKHAKKLKA). Positions 169–193 (MTTEITSKVEKSPTTATGNSSCPST) are enriched in polar residues. The interval 169–194 (MTTEITSKVEKSPTTATGNSSCPSTE) is disordered. Matrin-type zinc fingers lie at residues 204 to 234 (LYCS…MLEA) and 267 to 297 (FHCE…RAAG). The tract at residues 282-309 (LKQHISSRRHKDRAAGKPPKPKYSPYNK) is disordered.

The protein resides in the nucleus. In Homo sapiens (Human), this protein is Zinc finger protein 385D (ZNF385D).